Here is a 153-residue protein sequence, read N- to C-terminus: Jacalin-related lectin Calsepa (153 aa).

A2 is subject to N-acetylalanine. Positions 6 to 152 constitute a Jacalin-type lectin domain; that stretch reads DTISGPWGNN…VDAIGTYNRH (147 aa). N-glycan binding regions lie at residues 17 to 18, 95 to 96, and 140 to 144; these read GN, DN, and GYYVD.

It belongs to the jacalin lectin family. Homodimer. Post-translationally, not glycosylated. In terms of tissue distribution, rhizome (at protein level). Detected in the cortex and the pith of rhizome. Not detected in vascular tissues, pericycle, endodermis or rhizodermis.

It localises to the cytoplasm. Its activity is regulated as follows. Hemagglutinating activity is most inhibited by methyl alpha-mannopyranoside. This activity is inhibited to a less extent (about a third of the inhibition of that of methyl alpha-mannopyranoside) by methyl alpha-glucoside, other alpha-glucosides, such as maltose, isomaltose, panose or palatinose, and alpha-glucosides modified at the second position, such as methyl 2-deoxy-alpha-arabinoglucopyranoside or methyl 2-acetamido-2-deoxy alpha-glucopyranoside. Mildly inhibited by free monosaccharides, with glucose presenting at least 20-fold less inhibitory effect on hemagglutinating activity than mannose. Glycoproteins are somewhat inhibitory, the best being asialothyroglobulin and ovomucoid. Not inhibited by isomaltitol, sucrose or trehalose. Its function is as follows. Mannose-binding lectin. Preferentially binds mannose at concentrations ranging between 5 and 25 mM, but also binds glucose. Has a marked preference for methylated sugar derivatives, such as alpha-MeMan and alpha-MeGlc, at concentration down to 5 mM. Binds to N-glycans, but not to glycolipid-type or other type of glycans. Binds N-linked high-mannose-type glycans. Has a preference for smaller (Man(2)-Man(6)) high-mannose-type glycans to larger (Man(7)-Man(9)) ones. Recognizes both alpha1-6 extended and alpha1-3 extended monoantennary glycans. The addition of alpha1-2Man to the Man-alpha1-3Man-beta branch results in a significant loss of affinity, but beta1-2GlcNAc has some affinity. Has less affinity for biantennary glycans. However, affinity is significant for the biantennary complex-type N-glycans with bisecting GlcNAc. No affinity is observed for tri- and tetra-antennary glycans. Binds bisected glycans of the mouse brain. Selectively binds to bisecting N-glycans which are in back-fold conformation, and does not favor a glycan with an extend conformation. Has hemagglutinating activity against rabbit erythrocytes at 0.3 ug/ml and against trypsin-treated human erythrocytes at 5 ug/ml. Has mitogenic activity in murine cells. The sequence is that of Jacalin-related lectin Calsepa from Calystegia sepium (Hedge bindweed).